The chain runs to 308 residues: Large ribosomal subunit protein mL38 (308 aa).

A mitochondrion-targeting transit peptide spans M1 to A17.

The protein belongs to the phosphatidylethanolamine-binding protein family. Mitochondrion-specific ribosomal protein mL38 subfamily. As to quaternary structure, component of the mitochondrial large ribosomal subunit (mt-LSU). Mature yeast 74S mitochondrial ribosomes consist of a small (37S) and a large (54S) subunit. The 37S small subunit contains a 15S ribosomal RNA (15S mt-rRNA) and at least 32 different proteins. The 54S large subunit contains a 21S rRNA (21S mt-rRNA) and at least 45 different proteins.

The protein localises to the mitochondrion. Its function is as follows. Component of the mitochondrial ribosome (mitoribosome), a dedicated translation machinery responsible for the synthesis of mitochondrial genome-encoded proteins, including at least some of the essential transmembrane subunits of the mitochondrial respiratory chain. The mitoribosomes are attached to the mitochondrial inner membrane and translation products are cotranslationally integrated into the membrane. The polypeptide is Large ribosomal subunit protein mL38 (mrpl35) (Schizosaccharomyces pombe (strain 972 / ATCC 24843) (Fission yeast)).